Reading from the N-terminus, the 277-residue chain is 14-3-3 protein (277 aa).

Residues Leu252–Gln277 form a disordered region. A compositionally biased stretch (basic and acidic residues) spans Glu267–Gln277.

It belongs to the 14-3-3 family.

This chain is 14-3-3 protein, found in Eimeria tenella (Coccidian parasite).